The following is an 86-amino-acid chain: Large ribosomal subunit protein bL31B (86 aa).

The protein belongs to the bacterial ribosomal protein bL31 family. Type B subfamily. Part of the 50S ribosomal subunit.

The polypeptide is Large ribosomal subunit protein bL31B (Ralstonia pickettii (strain 12J)).